The chain runs to 282 residues: Acetylglutamate kinase (282 aa).

Substrate contacts are provided by residues 62-63 (GG), R84, and N178. Residues K196, S214, and 266–269 (EIFS) contribute to the L-arginine site.

In terms of assembly, homohexamer.

The protein localises to the cytoplasm. The enzyme catalyses N-acetyl-L-glutamate + ATP = N-acetyl-L-glutamyl 5-phosphate + ADP. Its pathway is amino-acid biosynthesis; L-arginine biosynthesis; N(2)-acetyl-L-ornithine from L-glutamate: step 2/4. With respect to regulation, allosterically inhibited by arginine. Catalyzes the ATP-dependent phosphorylation of N-acetyl-L-glutamate. This is Acetylglutamate kinase from Thermotoga maritima (strain ATCC 43589 / DSM 3109 / JCM 10099 / NBRC 100826 / MSB8).